The chain runs to 414 residues: MTQANLSETLFKPRFKHPETSTLVHRFNHGAQPPVQSALDGKTIPHWYRMINRLMWIWRGIDPREILDVQARIVMSDAERTDDDLYDTVIGYRGGNWIYEWATQAMVWQQKACAEEDPQLGGRHWLHAATLYNIAAYPHLKGDDLAEQAQALSNRAYEEAAQRLPGTMRQMEFTVPGGAPITGFLHMPKGDGPFPTVLMCGGLDAMQTDYYSLYERYFAPRGIAMLTIDMPSVGFSSKWKLTQDSSLLHQHVLKALPNVPWVDHTRVAAFGFRFGANVAVRLAYLESPRLKAVACLGPVVHTLLSDFKCQQQVPEMYLDVLASRLGMHDASDEALRVELNRYSLKVQGLLGRRCPTPMLSGYWKNDPFSLEEDSRLITSSSADGKLLEIPFNPVYRNFDKGLQEITDWIEKRLC.

Belongs to the FrsA family.

It carries out the reaction a carboxylic ester + H2O = an alcohol + a carboxylate + H(+). Functionally, catalyzes the hydrolysis of esters. The protein is Esterase FrsA of Shigella dysenteriae serotype 1 (strain Sd197).